A 321-amino-acid polypeptide reads, in one-letter code: Glutaminase (321 aa).

7 residues coordinate substrate: Ser69, Asn120, Glu165, Asn172, Tyr196, Tyr248, and Val266.

The protein belongs to the glutaminase family. Homotetramer.

It carries out the reaction L-glutamine + H2O = L-glutamate + NH4(+). This Bacteroides fragilis (strain ATCC 25285 / DSM 2151 / CCUG 4856 / JCM 11019 / LMG 10263 / NCTC 9343 / Onslow / VPI 2553 / EN-2) protein is Glutaminase.